A 108-amino-acid chain; its full sequence is Large ribosomal subunit protein uL24 (108 aa).

Belongs to the universal ribosomal protein uL24 family. Part of the 50S ribosomal subunit.

Functionally, one of two assembly initiator proteins, it binds directly to the 5'-end of the 23S rRNA, where it nucleates assembly of the 50S subunit. One of the proteins that surrounds the polypeptide exit tunnel on the outside of the subunit. This Pelobacter propionicus (strain DSM 2379 / NBRC 103807 / OttBd1) protein is Large ribosomal subunit protein uL24.